A 677-amino-acid chain; its full sequence is WD repeat-containing protein 43 (677 aa).

WD repeat units lie at residues 11 to 51 (PLAP…LHQE), 57 to 119 (HLSG…LHSK), 124 to 163 (GHDN…VKCK), 166 to 205 (GDNS…RHFT), 207 to 259 (HATP…KEKS), and 267 to 309 (TDEP…YCKK). Ser77 carries the post-translational modification Phosphoserine. Lys309 is covalently cross-linked (Glycyl lysine isopeptide (Lys-Gly) (interchain with G-Cter in SUMO1); alternate). Residue Lys309 forms a Glycyl lysine isopeptide (Lys-Gly) (interchain with G-Cter in SUMO2); alternate linkage. Thr321 is subject to Phosphothreonine. Residue Lys384 forms a Glycyl lysine isopeptide (Lys-Gly) (interchain with G-Cter in SUMO1); alternate linkage. Residue Lys384 forms a Glycyl lysine isopeptide (Lys-Gly) (interchain with G-Cter in SUMO2); alternate linkage. Position 394 is a phosphothreonine (Thr394). 4 positions are modified to phosphoserine: Ser399, Ser431, Ser437, and Ser590. Disordered regions lie at residues 414–445 (AIKP…LGAM) and 582–677 (SEKT…SEEE). Polar residues predominate over residues 582 to 592 (SEKTKGATSPG). Over residues 600–652 (EEESSEEESDDEIADKDSEDNWDEDEEESESEKDEDVEEEDEDAEGKDEENGE) the composition is skewed to acidic residues. Residues 653-663 (DRDTASEKELN) are compositionally biased toward basic and acidic residues. Thr656 bears the Phosphothreonine mark. At Ser658 the chain carries Phosphoserine. Residues 664 to 677 (GDSDLDPENESEEE) show a composition bias toward acidic residues.

The protein belongs to the UTP5 family. Part of the small subunit (SSU) processome, composed of more than 70 proteins and the RNA chaperone small nucleolar RNA (snoRNA) U3. May be a component of the proposed t-UTP subcomplex of the ribosomal small subunit (SSU) processome containing at least UTP4, WDR43, HEATR1, UTP15, WDR75. Binds to RNA; binding is required for its chromatin association. Interacts with CDK9, DDX21 and SUPT6H. Interacts with RNA polymerase II. Interacts directly with UTP4 and UTP15.

The protein resides in the nucleus. The protein localises to the nucleolus. It localises to the nucleolus fibrillar center. It is found in the nucleoplasm. Ribosome biogenesis factor that coordinates hyperactive transcription and ribogenesis. Part of the small subunit (SSU) processome, first precursor of the small eukaryotic ribosomal subunit. During the assembly of the SSU processome in the nucleolus, many ribosome biogenesis factors, an RNA chaperone and ribosomal proteins associate with the nascent pre-rRNA and work in concert to generate RNA folding, modifications, rearrangements and cleavage as well as targeted degradation of pre-ribosomal RNA by the RNA exosome. Involved in nucleolar processing of pre-18S ribosomal RNA. Required for optimal pre-ribosomal RNA transcription by RNA polymerase I. Essential for stem cell pluripotency and embryonic development. In the nucleoplasm, recruited by promoter-associated/nascent transcripts and transcription to active promoters where it facilitates releases of elongation factor P-TEFb and paused RNA polymerase II to allow transcription elongation and maintain high-level expression of its targets genes. In Homo sapiens (Human), this protein is WD repeat-containing protein 43.